Reading from the N-terminus, the 251-residue chain is MSYSKNNMLFKNVLNFKKNIPSHVAIIMDGNGKWARKRGKSRFFGHFSGFYAARRAISFALFHKLKILTLYAFSSDNWNRSPREIKVLMELFFYALSNETNNLNKYNIRLKVIGNKEKFNTVLKNKIRVVEKETLKNTGLLLNIAANYSGRWEILEAIKKIVVAIKCKNLSLNAITESTVSDFLLINEKIPVDLVIRTGGECRLSNFLVWQISYSELYFTNTLWPDFDRKEFKKAIDEFSNRERRFGRVSH.

Asp-29 is a catalytic residue. Asp-29 lines the Mg(2+) pocket. Substrate-binding positions include 30–33 (GNGK), Trp-34, Arg-42, His-46, and 74–76 (SSD). The active-site Proton acceptor is the Asn-77. Residues Trp-78, Arg-80, Arg-197, and 203 to 205 (RLS) each bind substrate. Position 216 (Glu-216) interacts with Mg(2+).

This sequence belongs to the UPP synthase family. Homodimer. Requires Mg(2+) as cofactor.

It carries out the reaction 8 isopentenyl diphosphate + (2E,6E)-farnesyl diphosphate = di-trans,octa-cis-undecaprenyl diphosphate + 8 diphosphate. In terms of biological role, catalyzes the sequential condensation of isopentenyl diphosphate (IPP) with (2E,6E)-farnesyl diphosphate (E,E-FPP) to yield (2Z,6Z,10Z,14Z,18Z,22Z,26Z,30Z,34E,38E)-undecaprenyl diphosphate (di-trans,octa-cis-UPP). UPP is the precursor of glycosyl carrier lipid in the biosynthesis of bacterial cell wall polysaccharide components such as peptidoglycan and lipopolysaccharide. This Buchnera aphidicola subsp. Baizongia pistaciae (strain Bp) protein is Ditrans,polycis-undecaprenyl-diphosphate synthase ((2E,6E)-farnesyl-diphosphate specific).